We begin with the raw amino-acid sequence, 78 residues long: Ubiquinol-cytochrome-c reductase complex assembly factor 3 (78 aa).

Residues 1 to 5 (MSGMR) lie on the Mitochondrial matrix side of the membrane. The helical transmembrane segment at 6–26 (ILTGSVALGGLTYAIWIIFSP) threads the bilayer. Residues 27 to 78 (GEERKKEILKSLPEANPVRMEETRKRNAIMLQVLKDAAETNDNIARGFGSQK) lie on the Mitochondrial intermembrane side of the membrane.

This sequence belongs to the UQCC3 family. In terms of assembly, associates with the ubiquinol-cytochrome c reductase complex (mitochondrial respiratory chain complex III or cytochrome b-c1 complex).

The protein localises to the mitochondrion inner membrane. Functionally, required for the assembly of the ubiquinol-cytochrome c reductase complex (mitochondrial respiratory chain complex III or cytochrome b-c1 complex), mediating cytochrome b recruitment and probably stabilization within the complex. Thereby, plays an important role in ATP production by mitochondria. Cardiolipin-binding protein, it may also control the cardiolipin composition of mitochondria membranes and their morphology. In Danio rerio (Zebrafish), this protein is Ubiquinol-cytochrome-c reductase complex assembly factor 3.